The chain runs to 854 residues: Protein mono-ADP-ribosyltransferase PARP9 (854 aa).

2 consecutive Macro domains span residues Leu107–Leu296 and Thr306–Ser487. Positions Ile628–Gly850 constitute a PARP catalytic domain.

The protein belongs to the ARTD/PARP family. As to quaternary structure, forms a stable complex with E3 ligase DTX3L; the interaction is required for PARP9 mediated ADP-ribosylation of ubiquitin. Interacts (via PARP catalytic domain) with DTX3L (via N-terminus). Forms a complex with STAT1 and DTX3L independently of IFNB1 or IFNG-mediated STAT1 'Tyr-701' phosphorylation. Forms a complex with STAT1, DTX3L and histone H2B H2BC9/H2BJ; the interaction is likely to induce H2BC9/H2BJ ubiquitination. Interacts (via N-terminus) with STAT1. Interacts with PARP14 in IFNG-stimulated macrophages; the interaction prevents PARP14-mediated STAT1 and STAT6 ADP-riboslylation. Interacts with PARP1 (when poly-ADP-ribosylated). Post-translationally, ADP-ribosylated by PARP14. Expressed in lymphocyte-rich tissues, spleen, lymph nodes, peripheral blood lymphocytes and colonic mucosa. Expressed in macrophages. Also expressed in nonhematopoietic tissues such as heart and skeletal muscle. Isoform 2 is the predominant form. Most abundantly expressed in lymphomas with a brisk host inflammatory response. In diffuse large B-cell lymphomas tumors, expressed specifically by malignant B-cells.

It is found in the cytoplasm. Its subcellular location is the cytosol. It localises to the nucleus. The catalysed reaction is [protein]-C-terminal glycine + NAD(+) = [protein]-C-terminal O-(ADP-D-ribosyl)-glycine + nicotinamide. With respect to regulation, binding to poly(ADP-ribose) does not affect its activity. Its function is as follows. ADP-ribosyltransferase which, in association with E3 ligase DTX3L, plays a role in DNA damage repair and in immune responses including interferon-mediated antiviral defenses. Within the complex, enhances DTX3L E3 ligase activity which is further enhanced by PARP9 binding to poly(ADP-ribose). In association with DTX3L and in presence of E1 and E2 enzymes, mediates NAD(+)-dependent mono-ADP-ribosylation of ubiquitin which prevents ubiquitin conjugation to substrates such as histones. During DNA repair, PARP1 recruits PARP9/BAL1-DTX3L complex to DNA damage sites via PARP9 binding to ribosylated PARP1. Subsequent PARP1-dependent PARP9/BAL1-DTX3L-mediated ubiquitination promotes the rapid and specific recruitment of 53BP1/TP53BP1, UIMC1/RAP80, and BRCA1 to DNA damage sites. In response to DNA damage, PARP9-DTX3L complex is required for efficient non-homologous end joining (NHEJ); the complex function is negatively modulated by PARP9 activity. Dispensable for B-cell receptor (BCR) assembly through V(D)J recombination and class switch recombination (CSR). In macrophages, positively regulates pro-inflammatory cytokines production in response to IFNG stimulation by suppressing PARP14-mediated STAT1 ADP-ribosylation and thus promoting STAT1 phosphorylation. Also suppresses PARP14-mediated STAT6 ADP-ribosylation. This Homo sapiens (Human) protein is Protein mono-ADP-ribosyltransferase PARP9 (PARP9).